A 71-amino-acid polypeptide reads, in one-letter code: Small, acid-soluble spore protein I (71 aa).

It belongs to the SspI family.

It is found in the spore core. In Bacillus velezensis (strain DSM 23117 / BGSC 10A6 / LMG 26770 / FZB42) (Bacillus amyloliquefaciens subsp. plantarum), this protein is Small, acid-soluble spore protein I.